Reading from the N-terminus, the 219-residue chain is Maleylacetoacetate isomerase (219 aa).

One can recognise a GST N-terminal domain in the interval asparagine 4–proline 87. Residues serine 14–arginine 19, glutamine 45, glutamine 71–serine 72, glutamine 111, and asparagine 115–lysine 117 each bind glutathione. The 126-residue stretch at glycine 92 to proline 217 folds into the GST C-terminal domain.

It belongs to the GST superfamily. Zeta family. The cofactor is glutathione.

It carries out the reaction 4-maleylacetoacetate = 4-fumarylacetoacetate. It participates in amino-acid degradation; L-phenylalanine degradation; acetoacetate and fumarate from L-phenylalanine: step 5/6. This chain is Maleylacetoacetate isomerase (mai), found in Dictyostelium discoideum (Social amoeba).